A 1980-amino-acid chain; its full sequence is Unconventional myosin-IXb (1980 aa).

Ser-2 is modified (N-acetylserine). Positions 15-114 (ATFHLHIYPQ…YYFLLQERNA (100 aa)) constitute a Ras-associating domain. The Myosin motor domain occupies 146-954 (ADFDDLCNLP…ERQALQERLH (809 aa)). 239–246 (GESGSGKT) lines the ATP pocket. The interval 715-736 (GVSSPVTRSHVEELPRGANTPS) is disordered. Phosphoserine is present on residues Ser-717 and Ser-718. An actin-binding region spans residues 845-856 (KAEPFFIRCIRS). The neck or regulatory domain stretch occupies residues 941-1045 (LKETERQALQ…CRGHLQRRSF (105 aa)). 4 consecutive IQ domains span residues 958 to 978 (LRRILLLQSWFRMVLERRHFV), 981 to 1001 (KHAALTIQACWRSYRVRRTLE), 1002 to 1024 (RTRAAVYLQAAWRGYLQRQAYHH), and 1025 to 1054 (QRHSIIRLQSLCRGHLQRRSFSQMMLEKQK). Ser-1046 is modified (phosphoserine). The interval 1046–1980 (SQMMLEKQKA…ERAVRGAAEE (935 aa)) is tail. Disordered regions lie at residues 1049 to 1281 (MLEK…HPDT), 1302 to 1380 (SQSL…QGDS), and 1394 to 1449 (DKKP…NRKV). The span at 1097–1106 (TWMNSKSPNG) shows a compositional bias: polar residues. Residues Ser-1108, Ser-1115, and Ser-1177 each carry the phosphoserine modification. Composition is skewed to basic and acidic residues over residues 1129–1177 (ESHE…RKAS) and 1186–1195 (EDTKEPREDG). Phosphoserine is present on residues Ser-1220, Ser-1222, Ser-1229, Ser-1237, Ser-1243, and Ser-1247. The segment covering 1235 to 1247 (RVSPVLPSSSLES) has biased composition (low complexity). The segment covering 1250–1265 (DEDKGENSTKVQDKPE) has biased composition (basic and acidic residues). Ser-1266, Ser-1268, and Ser-1304 each carry phosphoserine. Thr-1319 is subject to Phosphothreonine. A phosphoserine mark is found at Ser-1327, Ser-1329, and Ser-1337. Residues 1327-1344 (SFSTSDVSKLSPVKTSTE) show a composition bias toward polar residues. The Phorbol-ester/DAG-type zinc-finger motif lies at 1592-1641 (GHVFASYQVNIPQSCEQCLSYIWLMDKALLCSVCKMTCHKKCVHKIQSYC). A Phosphoserine modification is found at Ser-1649. One can recognise a Rho-GAP domain in the interval 1663–1848 (DSLTSDKASV…MLIKEQMRKY (186 aa)). The segment at 1699–1704 (AANRTR) is interaction with RHOA. A coiled-coil region spans residues 1841 to 1861 (IKEQMRKYKVKMEEINHLEAA). Ser-1886 carries the phosphoserine modification. Residues 1891–1923 (VRTKSPRTPVVQDLEELGALPEEAAGGDEDREK) form a disordered region. Positions 1918–1948 (DEDREKEILMERIQSIKEEKEDITYRLPELD) form a coiled coil. 3 positions are modified to phosphoserine: Ser-1932, Ser-1952, and Ser-1959. Over residues 1937–1953 (KEDITYRLPELDPRGSD) the composition is skewed to basic and acidic residues. Positions 1937–1980 (KEDITYRLPELDPRGSDEENLDSETSASTESLLEERAVRGAAEE) are disordered. A Phosphothreonine modification is found at Thr-1965. Over residues 1969–1980 (LEERAVRGAAEE) the composition is skewed to basic and acidic residues.

This sequence belongs to the TRAFAC class myosin-kinesin ATPase superfamily. Myosin family. In terms of assembly, interacts (via IQ domains) with CALM. Interacts with RHOA. Interacts (via Rho-GAP domain) with ROBO1; this inhibits the interaction with RHOA and the stimulation of RHOA GTPase activity, and thereby increases the levels of active RHOA. In terms of tissue distribution, expressed in testis, lung, thymus, brain, liver, spleen and heart muscle. Detected in lung, testis, spleen and liver, and at reduced level in different brain regions (at protein level).

The protein resides in the cytoplasm. It localises to the cell cortex. The protein localises to the perinuclear region. Its subcellular location is the cytoskeleton. In terms of biological role, myosins are actin-based motor molecules with ATPase activity. Unconventional myosins serve in intracellular movements. Binds actin with high affinity both in the absence and presence of ATP and its mechanochemical activity is inhibited by calcium ions. Also acts as a GTPase activator for RHOA. Plays a role in the regulation of cell migration via its role as RHOA GTPase activator. This is regulated by its interaction with the SLIT2 receptor ROBO1; interaction with ROBO1 impairs interaction with RHOA and subsequent activation of RHOA GTPase activity, and thereby leads to increased levels of active, GTP-bound RHOA. This chain is Unconventional myosin-IXb (Myo9b), found in Rattus norvegicus (Rat).